The following is a 334-amino-acid chain: LLMVLGFFFATYNLVSMIVGHKVGSDLGSIVDGKVEFTNTKSKFHVAVTATDAAYSQWQCRIMYYWYKKAKDMPGSAMGKFTRILHSGKEDQLMNEIPTFVVDPLPDGLDRGYIVLNRPWAFVQWLEKAVIDEEYILMAEPDHIFVNPLPNLASENEPAGYPFFYIKPAENEKIMRKFYPKEKGPVTDVDPIGNSPVIIHKYLLEEIAPTWVNVSLRMKDDPETDKVFGWVLEMYAYAVASALHGIKHTLRKDFMLQPPWDLEVGKTFIIHYTYGCDYNLKGKLTYGKIGEWRFDKRSYLMSPPPKNISLPPPGVPESVVRLVKMVNEATANIP.

The helical; Signal-anchor transmembrane segment at 1 to 18 (LLMVLGFFFATYNLVSMI) threads the bilayer.

Belongs to the RDN family.

It localises to the golgi apparatus membrane. It carries out the reaction trans-4-hydroxy-L-prolyl-[protein] + UDP-beta-L-arabinofuranose = O-(beta-L-arabinofuranosyl)-trans-4-hydroxy-L-prolyl-[protein] + UDP + H(+). In terms of biological role, probable glycosyltransferase involved in the O-arabinosylation of several proteins including extensins and small signaling peptides. Catalyzes the transfer of the initial L-arabinose to the hydroxyl group of Hyp residues. Probably involved in the arabinosylation of CLAVATA3/ESR-related (CLE) signaling peptides that move from root to shoot, to interact with receptor kinase signaling that regulates nodulation. Involved in long distance nodulation signaling events. Involved in the autoregulation of nodulation (AON), a long distance systemic signaling from root to shoot and back again, which allows legumes to limit the number of root nodules formed based on available nitrogen and previous rhizobial colonization. The protein is Hydroxyproline O-arabinosyltransferase NOD3 of Pisum sativum (Garden pea).